The primary structure comprises 555 residues: Pyrophosphate--fructose 6-phosphate 1-phosphotransferase (555 aa).

Gly82 provides a ligand contact to diphosphate. Position 146 (Arg146) interacts with substrate. Mg(2+) is bound at residue Asp176. Residues 204-206 (TID), 243-244 (KY), 251-253 (MGR), Glu312, and 428-431 (YEGR) each bind substrate. The active-site Proton acceptor is Asp206.

The protein belongs to the phosphofructokinase type A (PFKA) family. PPi-dependent PFK group II subfamily. Clade 'Long' sub-subfamily. In terms of assembly, homodimer. Requires Mg(2+) as cofactor.

Its subcellular location is the cytoplasm. It catalyses the reaction beta-D-fructose 6-phosphate + diphosphate = beta-D-fructose 1,6-bisphosphate + phosphate + H(+). It functions in the pathway carbohydrate degradation; glycolysis; D-glyceraldehyde 3-phosphate and glycerone phosphate from D-glucose: step 3/4. Non-allosteric. In terms of biological role, catalyzes the phosphorylation of D-fructose 6-phosphate, the first committing step of glycolysis. Uses inorganic phosphate (PPi) as phosphoryl donor instead of ATP like common ATP-dependent phosphofructokinases (ATP-PFKs), which renders the reaction reversible, and can thus function both in glycolysis and gluconeogenesis. Consistently, PPi-PFK can replace the enzymes of both the forward (ATP-PFK) and reverse (fructose-bisphosphatase (FBPase)) reactions. In Borreliella burgdorferi (strain ATCC 35210 / DSM 4680 / CIP 102532 / B31) (Borrelia burgdorferi), this protein is Pyrophosphate--fructose 6-phosphate 1-phosphotransferase.